We begin with the raw amino-acid sequence, 243 residues long: Ubiquinone/menaquinone biosynthesis C-methyltransferase UbiE (243 aa).

Residues Thr-69, Asp-90, and 116-117 (DA) contribute to the S-adenosyl-L-methionine site.

This sequence belongs to the class I-like SAM-binding methyltransferase superfamily. MenG/UbiE family.

The catalysed reaction is a 2-demethylmenaquinol + S-adenosyl-L-methionine = a menaquinol + S-adenosyl-L-homocysteine + H(+). It catalyses the reaction a 2-methoxy-6-(all-trans-polyprenyl)benzene-1,4-diol + S-adenosyl-L-methionine = a 5-methoxy-2-methyl-3-(all-trans-polyprenyl)benzene-1,4-diol + S-adenosyl-L-homocysteine + H(+). It participates in quinol/quinone metabolism; menaquinone biosynthesis; menaquinol from 1,4-dihydroxy-2-naphthoate: step 2/2. Its pathway is cofactor biosynthesis; ubiquinone biosynthesis. In terms of biological role, methyltransferase required for the conversion of demethylmenaquinol (DMKH2) to menaquinol (MKH2) and the conversion of 2-polyprenyl-6-methoxy-1,4-benzoquinol (DDMQH2) to 2-polyprenyl-3-methyl-6-methoxy-1,4-benzoquinol (DMQH2). This Paraburkholderia phytofirmans (strain DSM 17436 / LMG 22146 / PsJN) (Burkholderia phytofirmans) protein is Ubiquinone/menaquinone biosynthesis C-methyltransferase UbiE.